We begin with the raw amino-acid sequence, 659 residues long: Serine/threonine-protein kinase StkP (659 aa).

Over 1–342 (MIQIGKIFAG…PQAPKKHRFK (342 aa)) the chain is Cytoplasmic. The Protein kinase domain occupies 12–273 (YRIVKQIGRG…EMYVDLSSSL (262 aa)). Residues 18–26 (IGRGGMADV) and K42 contribute to the ATP site. The active-site Proton acceptor is D136. The helical transmembrane segment at 343 to 363 (MRYLILLASLVLVAASLIWIL) threads the bilayer. The Extracellular portion of the chain corresponds to 364–659 (SRTPATIAIP…YKPKTTSATP (296 aa)). PASTA domains are found at residues 366 to 433 (TPAT…VVSS), 434 to 505 (GKQS…TVAK), 506 to 577 (KATT…TVAK), and 578 to 651 (KVTS…SIYK). The disordered stretch occupies residues 541 to 561 (EEESSESEPGTIMKQSPGAGT).

Belongs to the protein kinase superfamily. Ser/Thr protein kinase family. As to quaternary structure, homodimer. StkP forms dimers through its transmembrane and extracellular domains. Dimer formation likely promotes autophosphorylation activity and might be necessary for targeting StkP substrate. Autophosphorylation occurs predominantly at the threonine residue and weakly at the serine residue. Dephosphorylated by PhpP.

The protein resides in the cell membrane. The catalysed reaction is L-seryl-[protein] + ATP = O-phospho-L-seryl-[protein] + ADP + H(+). It catalyses the reaction L-threonyl-[protein] + ATP = O-phospho-L-threonyl-[protein] + ADP + H(+). Functionally, protein kinase involved in signal transduction pathways that regulate various cellular processes. Likely senses intracellular peptidoglycan subunits present in the cell division septa of actively growing cells; thus, intracellular unlinked peptidoglycan may serve as the signal molecules that trigger StkP phosphorylation activity on a set of substrates. Plays a crucial role in the regulation of cell shape and cell division of S.pneumoniae through control of at least DivIVA activity. Is involved in competence triggering, and is required for the expression of the central competence operon comCDE. StkP also plays an important role for bacterial survival in vivo. Identified target substrates that are specifically phosphorylated by StkP in vivo, mainly on threonine residues, are DivIVA, GlmM, PpaC, MapZ, KhpB (also called EloR/Jag, shown in strains R6 and Rx1) and StkP itself. Autophosphorylated StkP is a substrate for the cotranscribed protein phosphatase PhpP (shown in the avirulent strain Rx / Cp1015); PhpP and StkP appear to constitute a functional signaling couple in vivo. This Streptococcus pneumoniae serotype 2 (strain D39 / NCTC 7466) protein is Serine/threonine-protein kinase StkP (stkP).